A 298-amino-acid polypeptide reads, in one-letter code: 1,2-dihydroxynaphthalene dioxygenase (298 aa).

VOC domains are found at residues 6-121 (ELGY…IFYG) and 146-267 (GIGH…FGWG). H149 is a binding site for Fe cation. Substrate is bound by residues H149, 196 to 197 (QH), H212, and Y253. H212 lines the Fe cation pocket. E263 contributes to the Fe cation binding site.

This sequence belongs to the extradiol ring-cleavage dioxygenase family. As to quaternary structure, homooctamer. Fe(2+) serves as cofactor.

It catalyses the reaction naphthalene-1,2-diol + O2 = 2-hydroxychromene-2-carboxylate + H(+). It functions in the pathway aromatic compound metabolism; naphthalene degradation. Functionally, involved in the naphthalene and naphthalenesulfonate catabolic pathway. Catalyzes the meta-cleavage of 1,2-dihydroxynaphthalene (1,2-DHN) to yield 2-hydroxychromene-2-carboxylic acid. Can also cleave 1,2,5-trihydroxynaphthalene (1,2,5-THN), 1,2,6-trihydroxynaphthalene (1,2,6-THN), 1,2,7-trihydroxynaphthalene (1,2,7-THN), 2,3-dihydroxybiphenyl, 3,4-dihydroxybiphenyl, catechol, 3-methylcatechol and 4-methylcatechol. In Sphingobium xenophagum, this protein is 1,2-dihydroxynaphthalene dioxygenase (nsaC).